Reading from the N-terminus, the 255-residue chain is 1-(5-phosphoribosyl)-5-[(5-phosphoribosylamino)methylideneamino] imidazole-4-carboxamide isomerase (255 aa).

Residue Asp8 is the Proton acceptor of the active site. Asp129 serves as the catalytic Proton donor.

The protein belongs to the HisA/HisF family.

The protein localises to the cytoplasm. It carries out the reaction 1-(5-phospho-beta-D-ribosyl)-5-[(5-phospho-beta-D-ribosylamino)methylideneamino]imidazole-4-carboxamide = 5-[(5-phospho-1-deoxy-D-ribulos-1-ylimino)methylamino]-1-(5-phospho-beta-D-ribosyl)imidazole-4-carboxamide. It participates in amino-acid biosynthesis; L-histidine biosynthesis; L-histidine from 5-phospho-alpha-D-ribose 1-diphosphate: step 4/9. The polypeptide is 1-(5-phosphoribosyl)-5-[(5-phosphoribosylamino)methylideneamino] imidazole-4-carboxamide isomerase (Gloeobacter violaceus (strain ATCC 29082 / PCC 7421)).